Reading from the N-terminus, the 345-residue chain is Sesquiterpene synthase PILCRDRAFT_825684 (345 aa).

Mg(2+)-binding residues include Asp91, Asn226, Ser230, and Glu234. The DDXXD motif signature appears at 91–95 (DELTD). Residues Arg316 and Tyr317 each coordinate (2E,6E)-farnesyl diphosphate.

Belongs to the terpene synthase family. Requires Mg(2+) as cofactor.

The catalysed reaction is (2E,6E)-farnesyl diphosphate = viridiflorene + diphosphate. In terms of biological role, terpene cyclase that catalyzes the cyclization of farnesyl diphosphate (FPP) to various sesquiterpenes, including beta-elemene, viridiflorene and gamma-cadinene. Gamma-cadinene is the major product of PILCRDRAFT_825684. The sequence is that of Sesquiterpene synthase PILCRDRAFT_825684 from Piloderma croceum (strain F 1598).